The sequence spans 152 residues: MFRGATLVNLDSKGRLTVPTRYREQLIESATGQIVCTIDIHHPCLLLYPLPEWEIIEQKLSRLSSMNPVERRVQRLLLGHASECQMDGAGRLLIAPVLRQHAGLTKEVMLVGQFNKFELWDETTWYQQVKEDIDAEQSATETLSERLQDLSL.

SpoVT-AbrB domains are found at residues 5 to 52 and 81 to 124; these read ATLV…PLPE and ASEC…DETT.

This sequence belongs to the MraZ family. In terms of assembly, forms oligomers.

The protein localises to the cytoplasm. Its subcellular location is the nucleoid. Negatively regulates its own expression and that of the subsequent genes in the proximal part of the division and cell wall (dcw) gene cluster. Acts by binding directly to DNA. May also regulate the expression of genes outside the dcw cluster. The polypeptide is Transcriptional regulator MraZ (Salmonella typhi).